The chain runs to 114 residues: Iron-sulfur cluster insertion protein ErpA (114 aa).

Positions 42, 106, and 108 each coordinate iron-sulfur cluster.

Belongs to the HesB/IscA family. Homodimer. It depends on iron-sulfur cluster as a cofactor.

Functionally, required for insertion of 4Fe-4S clusters for at least IspG. In Wigglesworthia glossinidia brevipalpis, this protein is Iron-sulfur cluster insertion protein ErpA.